Consider the following 547-residue polypeptide: Probable terpene synthase 3 (547 aa).

Positions 298, 302, and 451 each coordinate Mg(2+). Positions 298–302 match the DDXXD motif motif; it reads DDIYD.

This sequence belongs to the terpene synthase family. Requires Mg(2+) as cofactor.

In terms of biological role, probable sesquiterpene synthase. The chain is Probable terpene synthase 3 (TPS3) from Ricinus communis (Castor bean).